A 325-amino-acid chain; its full sequence is Protein VP6-B (325 aa).

Disordered stretches follow at residues 23–123 (INLI…TIGA) and 176–229 (VAEQ…EEQA). 2 stretches are compositionally biased toward basic and acidic residues: residues 32 to 52 (ESGK…ESKD) and 61 to 79 (SQKK…DRRI). A compositionally biased stretch (gly residues) spans 106 to 123 (KVGGGGGNADAGVGTIGA). 2 stretches are compositionally biased toward basic and acidic residues: residues 176–201 (VAEQ…AAER) and 210–226 (PHGD…KTSE).

It belongs to the orbivirus VP6 family.

Its subcellular location is the virion. Functionally, surrounds and interacts with the genomic dsRNA. Possesses ss- and dsRNA-binding capacity. Its hydrophilic nature and capability to bind ss- and dsRNA suggest that it interacts with BTV genomic RNA. The polypeptide is Protein VP6-B (Segment-9) (Bluetongue virus 10 (isolate USA) (BTV 10)).